Here is a 163-residue protein sequence, read N- to C-terminus: MADSSFDIVSKVDRQEVDNALNQAAKELATRFDFRGTDTTIEWQGEEGIILVSSTEERVKAAVDVFKEKLIRRDISMKAFDAGDPQPSGKTYKVIGSIKQGISSEDAKKVTKLIRDEGPKGVKAQIQGEEIRVSSKKRDDLQAVQALLRGADLDFAVQFVNYR.

The protein belongs to the YajQ family.

In terms of biological role, nucleotide-binding protein. The polypeptide is Nucleotide-binding protein Mflv_5248 (Mycolicibacterium gilvum (strain PYR-GCK) (Mycobacterium gilvum (strain PYR-GCK))).